A 637-amino-acid chain; its full sequence is Threonine--tRNA ligase (637 aa).

One can recognise a TGS domain in the interval 1-61; it reads MLNITLPDGS…VEDSAVQIIT (61 aa). Positions 242–533 are catalytic; the sequence is DHRKLGKQLD…LIENHAGSFP (292 aa). Zn(2+) is bound by residues cysteine 333, histidine 384, and histidine 510.

Belongs to the class-II aminoacyl-tRNA synthetase family. Homodimer. The cofactor is Zn(2+).

It localises to the cytoplasm. It catalyses the reaction tRNA(Thr) + L-threonine + ATP = L-threonyl-tRNA(Thr) + AMP + diphosphate + H(+). Its function is as follows. Catalyzes the attachment of threonine to tRNA(Thr) in a two-step reaction: L-threonine is first activated by ATP to form Thr-AMP and then transferred to the acceptor end of tRNA(Thr). Also edits incorrectly charged L-seryl-tRNA(Thr). This is Threonine--tRNA ligase from Neisseria meningitidis serogroup B (strain ATCC BAA-335 / MC58).